The primary structure comprises 486 residues: Probable cytosol aminopeptidase (486 aa).

The protein belongs to the peptidase M17 family. Requires Mn(2+) as cofactor.

The protein resides in the cytoplasm. The catalysed reaction is Release of an N-terminal amino acid, Xaa-|-Yaa-, in which Xaa is preferably Leu, but may be other amino acids including Pro although not Arg or Lys, and Yaa may be Pro. Amino acid amides and methyl esters are also readily hydrolyzed, but rates on arylamides are exceedingly low.. The enzyme catalyses Release of an N-terminal amino acid, preferentially leucine, but not glutamic or aspartic acids.. In terms of biological role, presumably involved in the processing and regular turnover of intracellular proteins. Catalyzes the removal of unsubstituted N-terminal amino acids from various peptides. The polypeptide is Probable cytosol aminopeptidase (pepA) (Synechococcus elongatus (strain ATCC 33912 / PCC 7942 / FACHB-805) (Anacystis nidulans R2)).